Here is a 272-residue protein sequence, read N- to C-terminus: 2,3,4,5-tetrahydropyridine-2,6-dicarboxylate N-succinyltransferase (272 aa).

Substrate contacts are provided by Arg104 and Asp141.

Belongs to the transferase hexapeptide repeat family. In terms of assembly, homotrimer.

Its subcellular location is the cytoplasm. It carries out the reaction (S)-2,3,4,5-tetrahydrodipicolinate + succinyl-CoA + H2O = (S)-2-succinylamino-6-oxoheptanedioate + CoA. It participates in amino-acid biosynthesis; L-lysine biosynthesis via DAP pathway; LL-2,6-diaminopimelate from (S)-tetrahydrodipicolinate (succinylase route): step 1/3. The chain is 2,3,4,5-tetrahydropyridine-2,6-dicarboxylate N-succinyltransferase from Alkalilimnicola ehrlichii (strain ATCC BAA-1101 / DSM 17681 / MLHE-1).